A 1374-amino-acid chain; its full sequence is Serine/threonine-protein kinase LMTK1 (1374 aa).

The helical transmembrane segment at 32-52 (LAVVAVSFSGLFAVIVLMLAC) threads the bilayer. In terms of domain architecture, Protein kinase spans 125 to 395 (LLYLKEIGRG…PTAEEVHLLL (271 aa)). Residues 131-139 (IGRGWFGKV) and Lys156 each bind ATP. The Proton acceptor role is filled by Asp253. At Ser495 the chain carries Phosphoserine. Disordered regions lie at residues 542-622 (GHDP…LAEG), 667-731 (VGAR…LLGL), 765-1195 (WTET…PAVP), 1245-1302 (QESP…AWDD), and 1320-1374 (AAPA…SKEA). A compositionally biased stretch (low complexity) spans 606–620 (PSRSPSPSAGPLSLA). A compositionally biased stretch (polar residues) spans 680–690 (SNVSANNNSGS). Composition is skewed to low complexity over residues 719–731 (PEPG…LLGL), 801–831 (SPSQ…TPAT), and 847–856 (SSSSPEVEAP). Polar residues predominate over residues 865-878 (EATSGIFTDTSSDG). Positions 900–914 (PDSLDSLDIPSSASD) are enriched in low complexity. The segment covering 978 to 987 (RLSTSLSGLN) has biased composition (polar residues). Ser1029 carries the post-translational modification Phosphoserine. The span at 1063 to 1073 (EGSSPEPSTCP) shows a compositional bias: polar residues. The span at 1138–1155 (TPRAPLRLALPGLPAALE) shows a compositional bias: low complexity. Residues 1158 to 1173 (PEEEEEDSEDSDESDE) show a composition bias toward acidic residues. 5 positions are modified to phosphoserine: Ser1168, Ser1171, Ser1184, Ser1187, and Ser1262. The span at 1272–1291 (GSPSAPNRPQQADGSPNGST) shows a compositional bias: polar residues. A compositionally biased stretch (pro residues) spans 1321-1332 (APAPAAPTPTPA). Over residues 1337-1352 (FTVSPAPTSRFSITHV) the composition is skewed to polar residues. The span at 1353–1363 (SDSDAESKRGP) shows a compositional bias: basic and acidic residues. Residues 1365 to 1374 (AGAGGESKEA) are compositionally biased toward gly residues.

The protein belongs to the protein kinase superfamily. Tyr protein kinase family. Interacts with CDK5. Autophosphorylated. Phosphorylated by CDK5. As to expression, expressed in brain.

The protein localises to the membrane. It localises to the cytoplasm. The protein resides in the perinuclear region. The catalysed reaction is L-seryl-[protein] + ATP = O-phospho-L-seryl-[protein] + ADP + H(+). The enzyme catalyses L-threonyl-[protein] + ATP = O-phospho-L-threonyl-[protein] + ADP + H(+). Functionally, may be involved in neuronal differentiation. This chain is Serine/threonine-protein kinase LMTK1 (AATK), found in Homo sapiens (Human).